We begin with the raw amino-acid sequence, 389 residues long: Formate-dependent phosphoribosylglycinamide formyltransferase (389 aa).

Residues 15-16 and Glu-75 each bind N(1)-(5-phospho-beta-D-ribosyl)glycinamide; that span reads EL. ATP contacts are provided by residues Arg-107, Lys-148, 153–158, 188–191, and Glu-196; these read SSGKGQ and EEFL. Positions 112–302 constitute an ATP-grasp domain; that stretch reads NLAAGELGLR…EFDLHLRAVL (191 aa). Mg(2+) is bound by residues Glu-261 and Glu-273. Residues Asp-280, Lys-350, and 357–358 contribute to the N(1)-(5-phospho-beta-D-ribosyl)glycinamide site; that span reads RR.

It belongs to the PurK/PurT family. As to quaternary structure, homodimer.

The enzyme catalyses N(1)-(5-phospho-beta-D-ribosyl)glycinamide + formate + ATP = N(2)-formyl-N(1)-(5-phospho-beta-D-ribosyl)glycinamide + ADP + phosphate + H(+). It functions in the pathway purine metabolism; IMP biosynthesis via de novo pathway; N(2)-formyl-N(1)-(5-phospho-D-ribosyl)glycinamide from N(1)-(5-phospho-D-ribosyl)glycinamide (formate route): step 1/1. Involved in the de novo purine biosynthesis. Catalyzes the transfer of formate to 5-phospho-ribosyl-glycinamide (GAR), producing 5-phospho-ribosyl-N-formylglycinamide (FGAR). Formate is provided by PurU via hydrolysis of 10-formyl-tetrahydrofolate. The sequence is that of Formate-dependent phosphoribosylglycinamide formyltransferase from Synechococcus sp. (strain CC9311).